The primary structure comprises 488 residues: Argininosuccinate lyase (488 aa).

It belongs to the lyase 1 family. Argininosuccinate lyase subfamily.

The protein localises to the cytoplasm. The enzyme catalyses 2-(N(omega)-L-arginino)succinate = fumarate + L-arginine. The protein operates within amino-acid biosynthesis; L-arginine biosynthesis; L-arginine from L-ornithine and carbamoyl phosphate: step 3/3. This Corynebacterium jeikeium (strain K411) protein is Argininosuccinate lyase.